The following is a 321-amino-acid chain: Lipoyl synthase (321 aa).

Positions 68, 73, 79, 94, 98, 101, and 308 each coordinate [4Fe-4S] cluster. The 218-residue stretch at 80-297 folds into the Radical SAM core domain; sequence FNHGTATFMI…KDVAMGLGFS (218 aa).

Belongs to the radical SAM superfamily. Lipoyl synthase family. Requires [4Fe-4S] cluster as cofactor.

It localises to the cytoplasm. The enzyme catalyses [[Fe-S] cluster scaffold protein carrying a second [4Fe-4S](2+) cluster] + N(6)-octanoyl-L-lysyl-[protein] + 2 oxidized [2Fe-2S]-[ferredoxin] + 2 S-adenosyl-L-methionine + 4 H(+) = [[Fe-S] cluster scaffold protein] + N(6)-[(R)-dihydrolipoyl]-L-lysyl-[protein] + 4 Fe(3+) + 2 hydrogen sulfide + 2 5'-deoxyadenosine + 2 L-methionine + 2 reduced [2Fe-2S]-[ferredoxin]. The protein operates within protein modification; protein lipoylation via endogenous pathway; protein N(6)-(lipoyl)lysine from octanoyl-[acyl-carrier-protein]: step 2/2. Catalyzes the radical-mediated insertion of two sulfur atoms into the C-6 and C-8 positions of the octanoyl moiety bound to the lipoyl domains of lipoate-dependent enzymes, thereby converting the octanoylated domains into lipoylated derivatives. This Aeromonas hydrophila subsp. hydrophila (strain ATCC 7966 / DSM 30187 / BCRC 13018 / CCUG 14551 / JCM 1027 / KCTC 2358 / NCIMB 9240 / NCTC 8049) protein is Lipoyl synthase.